The chain runs to 56 residues: Small ribosomal subunit protein uS14 (56 aa).

4 residues coordinate Zn(2+): C21, C24, C39, and C42.

Belongs to the universal ribosomal protein uS14 family. Zinc-binding uS14 subfamily. In terms of assembly, part of the 30S ribosomal subunit. It depends on Zn(2+) as a cofactor.

In terms of biological role, binds 16S rRNA, required for the assembly of 30S particles. The sequence is that of Small ribosomal subunit protein uS14 from Methanospirillum hungatei JF-1 (strain ATCC 27890 / DSM 864 / NBRC 100397 / JF-1).